The sequence spans 132 residues: Small ribosomal subunit protein uS8 (132 aa).

It belongs to the universal ribosomal protein uS8 family. In terms of assembly, part of the 30S ribosomal subunit. Contacts proteins S5 and S12.

In terms of biological role, one of the primary rRNA binding proteins, it binds directly to 16S rRNA central domain where it helps coordinate assembly of the platform of the 30S subunit. The sequence is that of Small ribosomal subunit protein uS8 from Nitrobacter hamburgensis (strain DSM 10229 / NCIMB 13809 / X14).